A 536-amino-acid chain; its full sequence is Glutamyl-tRNA(Gln) amidotransferase subunit B, mitochondrial (536 aa).

This sequence belongs to the GatB/GatE family. GatB subfamily. As to quaternary structure, subunit of the heterotrimeric GatFAB amidotransferase (AdT) complex, composed of A, B and F subunits.

Its subcellular location is the mitochondrion. It carries out the reaction L-glutamyl-tRNA(Gln) + L-glutamine + ATP + H2O = L-glutaminyl-tRNA(Gln) + L-glutamate + ADP + phosphate + H(+). Allows the formation of correctly charged Gln-tRNA(Gln) through the transamidation of misacylated Glu-tRNA(Gln) in the mitochondria. The reaction takes place in the presence of glutamine and ATP through an activated gamma-phospho-Glu-tRNA(Gln). In Vanderwaltozyma polyspora (strain ATCC 22028 / DSM 70294 / BCRC 21397 / CBS 2163 / NBRC 10782 / NRRL Y-8283 / UCD 57-17) (Kluyveromyces polysporus), this protein is Glutamyl-tRNA(Gln) amidotransferase subunit B, mitochondrial.